Here is a 345-residue protein sequence, read N- to C-terminus: Protease HtpX homolog (345 aa).

A run of 2 helical transmembrane segments spans residues 6–26 (TAML…LVGG) and 27–47 (SNGM…SYWN). H130 contacts Zn(2+). The active site involves E131. H134 is a Zn(2+) binding site. A run of 2 helical transmembrane segments spans residues 145–165 (LTAT…FMGG) and 179–199 (IGGL…QMAI). E204 is a binding site for Zn(2+).

It belongs to the peptidase M48B family. The cofactor is Zn(2+).

The protein resides in the cell inner membrane. This is Protease HtpX homolog from Bartonella henselae (strain ATCC 49882 / DSM 28221 / CCUG 30454 / Houston 1) (Rochalimaea henselae).